We begin with the raw amino-acid sequence, 396 residues long: Enoyl-[acyl-carrier-protein] reductase [NADH] (396 aa).

Residues 47–52 (GASTGF), 73–74 (FE), 110–111 (DA), and 138–139 (LA) contribute to the NAD(+) site. Residue Y224 participates in substrate binding. The Proton donor role is filled by Y234. Residues K243 and 272–274 (LVT) contribute to the NAD(+) site.

Belongs to the TER reductase family. In terms of assembly, monomer.

It carries out the reaction a 2,3-saturated acyl-[ACP] + NAD(+) = a (2E)-enoyl-[ACP] + NADH + H(+). It participates in lipid metabolism; fatty acid biosynthesis. Involved in the final reduction of the elongation cycle of fatty acid synthesis (FAS II). Catalyzes the reduction of a carbon-carbon double bond in an enoyl moiety that is covalently linked to an acyl carrier protein (ACP). This Flavobacterium johnsoniae (strain ATCC 17061 / DSM 2064 / JCM 8514 / BCRC 14874 / CCUG 350202 / NBRC 14942 / NCIMB 11054 / UW101) (Cytophaga johnsonae) protein is Enoyl-[acyl-carrier-protein] reductase [NADH].